Consider the following 406-residue polypeptide: Pyruvate dehydrogenase E1 component subunit beta-3, chloroplastic (406 aa).

The N-terminal 70 residues, 1–70 (MSAILQGAGA…PLIPNAVTTK (70 aa)), are a transit peptide targeting the chloroplast. Glu142 is a thiamine diphosphate binding site. K(+)-binding residues include Val195, Ala243, Ile244, and Asn248.

Tetramer of 2 alpha and 2 beta subunits. Thiamine diphosphate is required as a cofactor.

Its subcellular location is the plastid. The protein localises to the chloroplast. It carries out the reaction N(6)-[(R)-lipoyl]-L-lysyl-[protein] + pyruvate + H(+) = N(6)-[(R)-S(8)-acetyldihydrolipoyl]-L-lysyl-[protein] + CO2. In terms of biological role, the pyruvate dehydrogenase complex catalyzes the overall conversion of pyruvate to acetyl-CoA and CO(2). It contains multiple copies of three enzymatic components: pyruvate dehydrogenase (E1), dihydrolipoamide acetyltransferase (E2) and lipoamide dehydrogenase (E3). This chain is Pyruvate dehydrogenase E1 component subunit beta-3, chloroplastic (E1-BETA-2), found in Arabidopsis thaliana (Mouse-ear cress).